Here is a 522-residue protein sequence, read N- to C-terminus: Alanine aminotransferase 2 (522 aa).

Lys340 is subject to N6-(pyridoxal phosphate)lysine. 3 positions are modified to N6-acetyllysine: Lys414, Lys504, and Lys511.

It belongs to the class-I pyridoxal-phosphate-dependent aminotransferase family. Alanine aminotransferase subfamily. As to quaternary structure, homodimer. Pyridoxal 5'-phosphate serves as cofactor. In terms of tissue distribution, specifically induced in fatty liver. Highly expressed in muscle, liver and white adipose tissue. Moderately expressed in brain and kidney and expressed at low levels in the heart.

It carries out the reaction L-alanine + 2-oxoglutarate = pyruvate + L-glutamate. The protein operates within amino-acid degradation; L-alanine degradation via transaminase pathway; pyruvate from L-alanine: step 1/1. In terms of biological role, catalyzes the reversible transamination between alanine and 2-oxoglutarate to form pyruvate and glutamate. The polypeptide is Alanine aminotransferase 2 (Gpt2) (Mus musculus (Mouse)).